A 101-amino-acid chain; its full sequence is RNA-binding protein Hfq (101 aa).

A Sm domain is found at 9 to 68 (DPFLNALRRERVPVSIYLVNGIKLQGQVESFDQFVILLKNTVSQMVYKHAISTVVPSPPV). The tract at residues 62 to 101 (VVPSPPVSHHSNTPSGSTNNYHGSNPSAPQQPQQDSDDAE) is disordered. Polar residues predominate over residues 70–86 (HHSNTPSGSTNNYHGSN).

Belongs to the Hfq family. As to quaternary structure, homohexamer.

RNA chaperone that binds small regulatory RNA (sRNAs) and mRNAs to facilitate mRNA translational regulation in response to envelope stress, environmental stress and changes in metabolite concentrations. Also binds with high specificity to tRNAs. In Yersinia pestis (strain Pestoides F), this protein is RNA-binding protein Hfq.